Reading from the N-terminus, the 509-residue chain is uncharacterized protein (509 aa).

In terms of domain architecture, RNase NYN spans 358–480 (RRIVIIDAIS…IIPFIVENGE (123 aa)).

This is an uncharacterized protein from Methanocaldococcus jannaschii (strain ATCC 43067 / DSM 2661 / JAL-1 / JCM 10045 / NBRC 100440) (Methanococcus jannaschii).